Consider the following 79-residue polypeptide: Small ribosomal subunit protein bS21 (79 aa).

Basic residues-rich tracts occupy residues 47-59 (RKQAAAVKRHLKK) and 69-79 (GVGHRRKKSTT). The segment at 47 to 79 (RKQAAAVKRHLKKISRDVSSRRGVGHRRKKSTT) is disordered.

It belongs to the bacterial ribosomal protein bS21 family.

The chain is Small ribosomal subunit protein bS21 from Legionella pneumophila (strain Paris).